The following is a 257-amino-acid chain: 3-oxo-5-alpha-steroid 4-dehydrogenase 1 (257 aa).

6 helical membrane-spanning segments follow: residues 7–27 (FLLD…YVLL), 50–70 (AAWT…CAGA), 84–104 (ILLA…PFLI), 109–129 (PMPL…GYLQ), 149–169 (FLTG…SDHV), and 208–228 (ALAS…CVLF).

It belongs to the steroid 5-alpha reductase family.

It localises to the microsome membrane. The protein localises to the endoplasmic reticulum membrane. It carries out the reaction a 3-oxo-5alpha-steroid + NADP(+) = a 3-oxo-Delta(4)-steroid + NADPH + H(+). The catalysed reaction is 5alpha-pregnane-3,20-dione + NADP(+) = progesterone + NADPH + H(+). It catalyses the reaction 17beta-hydroxy-5alpha-androstan-3-one + NADP(+) = testosterone + NADPH + H(+). The enzyme catalyses androst-4-ene-3,17-dione + NADPH + H(+) = 5alpha-androstan-3,17-dione + NADP(+). In terms of biological role, converts testosterone into 5-alpha-dihydrotestosterone and progesterone or corticosterone into their corresponding 5-alpha-3-oxosteroids. It plays a central role in sexual differentiation and androgen physiology. The sequence is that of 3-oxo-5-alpha-steroid 4-dehydrogenase 1 (SRD5A1) from Bos taurus (Bovine).